The sequence spans 187 residues: Small ribosomal subunit protein uS5 (187 aa).

Residues 20 to 83 enclose the S5 DRBM domain; the sequence is FADRLVAINR…EQAKRQMIRV (64 aa). A disordered region spans residues 155-187; the sequence is KKEQSPRSVAQRRGKKVADILPKRDEAPAEAEA. The segment covering 170–181 has biased composition (basic and acidic residues); it reads KVADILPKRDEA.

This sequence belongs to the universal ribosomal protein uS5 family. In terms of assembly, part of the 30S ribosomal subunit. Contacts proteins S4 and S8.

Functionally, with S4 and S12 plays an important role in translational accuracy. In terms of biological role, located at the back of the 30S subunit body where it stabilizes the conformation of the head with respect to the body. The chain is Small ribosomal subunit protein uS5 from Ruegeria sp. (strain TM1040) (Silicibacter sp.).